The chain runs to 676 residues: Electrogenic aspartate/glutamate antiporter SLC25A12, mitochondrial (676 aa).

A2 is subject to N-acetylalanine. The segment at A2–P293 is regulatory N-terminal domain. At A2–R328 the chain is on the mitochondrial intermembrane side. Ca(2+) is bound by residues D65, T67, D69, L71, and E76. 4 EF-hand domains span residues D65–E76, A86–H121, P125–Q155, and L157–H192. The tract at residues L294–Q309 is linker loop domain. The tract at residues W319–L611 is carrier domain. Solcar repeat units follow at residues A323–K415, I423–L507, and V515–W603. The helical transmembrane segment at F329–I346 threads the bilayer. Topologically, residues D347 to R389 are mitochondrial matrix. The chain crosses the membrane as a helical span at residues G390 to N409. Topologically, residues D410–G432 are mitochondrial intermembrane. Residues G433–L446 form a helical membrane-spanning segment. Residues E447–K481 are Mitochondrial matrix-facing. A helical transmembrane segment spans residues G482–Y501. Topologically, residues A502–L520 are mitochondrial intermembrane. The chain crosses the membrane as a helical span at residues L521–A538. Over D539–K577 the chain is Mitochondrial matrix. The helical transmembrane segment at G578–Y597 threads the bilayer. Residues E598–Q676 are Mitochondrial intermembrane-facing. Residues K612–A674 form a C-terminal domain region.

This sequence belongs to the mitochondrial carrier (TC 2.A.29) family. As to quaternary structure, homodimer (via N-terminus).

The protein resides in the mitochondrion inner membrane. It catalyses the reaction L-aspartate(in) + L-glutamate(out) + H(+)(out) = L-aspartate(out) + L-glutamate(in) + H(+)(in). It carries out the reaction 3-sulfino-L-alanine(out) + L-glutamate(in) + H(+)(in) = 3-sulfino-L-alanine(in) + L-glutamate(out) + H(+)(out). The catalysed reaction is 3-sulfino-L-alanine(out) + L-aspartate(in) = 3-sulfino-L-alanine(in) + L-aspartate(out). With respect to regulation, L-aspartate and 3-sulfino-L-alanine uptake are both inhibited by glisoxepide. Mitochondrial electrogenic aspartate/glutamate antiporter that favors efflux of aspartate and entry of glutamate and proton within the mitochondria as part of the malate-aspartate shuttle. Also mediates the uptake of L-cysteinesulfinate (3-sulfino-L-alanine) by mitochondria in exchange of L-glutamate and proton. Can also exchange L-cysteinesulfinate with aspartate in their anionic form without any proton translocation. Lacks transport activity towards L-glutamine or gamma-aminobutyric acid (GABA). The protein is Electrogenic aspartate/glutamate antiporter SLC25A12, mitochondrial of Rattus norvegicus (Rat).